A 628-amino-acid polypeptide reads, in one-letter code: Probable potassium transport system protein Kup 1 (628 aa).

12 consecutive transmembrane segments (helical) span residues 18–38 (ITLA…LYAL), 58–78 (IVSL…VLLV), 106–126 (ALLM…AVIT), 141–161 (ITPE…VILF), 175–195 (FGPI…YEIV), 219–239 (IAFI…ALYA), 253–273 (WGSL…ALLL), 285–305 (LLAP…ATVI), 343–363 (IYLP…IIWF), 371–391 (AAYG…LMVV), 401–421 (WLIA…FAAN), and 425–445 (FLAG…VMTT).

This sequence belongs to the HAK/KUP transporter (TC 2.A.72) family.

The protein localises to the cell inner membrane. The enzyme catalyses K(+)(in) + H(+)(in) = K(+)(out) + H(+)(out). Transport of potassium into the cell. Likely operates as a K(+):H(+) symporter. This chain is Probable potassium transport system protein Kup 1, found in Aeromonas hydrophila subsp. hydrophila (strain ATCC 7966 / DSM 30187 / BCRC 13018 / CCUG 14551 / JCM 1027 / KCTC 2358 / NCIMB 9240 / NCTC 8049).